The chain runs to 546 residues: Cyclic GMP-AMP synthase-like receptor (546 aa).

The span at 1-10 (MPVGSRQNRV) shows a compositional bias: polar residues. Disordered regions lie at residues 1–116 (MPVG…CASR) and 134–186 (AKQE…RLTN). The span at 35 to 45 (YTERKERKDVQ) shows a compositional bias: basic and acidic residues. Over residues 69–80 (TSRTLRQTSQSR) the composition is skewed to low complexity. 2 stretches are compositionally biased toward basic and acidic residues: residues 82–95 (EVLERNESGSDCKK) and 145–174 (KEGYADEEQKIENSTQERKVVNTSMEDKAT). The span at 175–186 (SHSTKGSFRLTN) shows a compositional bias: polar residues. ATP is bound by residues Ser243 and 255–257 (EFD). Mg(2+) is bound by residues Glu255, Asp257, and Asp374. GTP contacts are provided by residues Asp374 and 428-435 (RTSFSLAE). ATP contacts are provided by residues 432–435 (SLAE), Lys455, and 470–474 (SYHLK).

This sequence belongs to the mab-21 family. The cofactor is Mg(2+). Requires Mn(2+) as cofactor.

It catalyses the reaction GTP + ATP = 2',3'-cGAMP + 2 diphosphate. The enzyme catalyses GTP + ATP = pppGp(2'-5')A + diphosphate. The catalysed reaction is pppGp(2'-5')A = 2',3'-cGAMP + diphosphate. Nucleotidyltransferase that catalyzes the formation of cyclic GMP-AMP (2',3'-cGAMP) from ATP and GTP and plays a key role in innate immunity. Directly binds some unknown ligand, activating the nucleotidyltransferase activity, leading to synthesis of 2',3'-cGAMP, a second messenger that binds to and activates Sting, thereby triggering the immune response via activation of the NF-kappa-B transcription factor. This is Cyclic GMP-AMP synthase-like receptor from Exaiptasia diaphana (Tropical sea anemone).